A 24-amino-acid polypeptide reads, in one-letter code: Acetylcholine receptor subunit alpha (24 aa).

The protein belongs to the ligand-gated ion channel (TC 1.A.9) family. Acetylcholine receptor (TC 1.A.9.1) subfamily. Alpha-1/CHRNA1 sub-subfamily. As to quaternary structure, one of the alpha chains that assemble within the acetylcholine receptor, a pentamer of two alpha chains, a beta, a delta, and a gamma or epsilon chains.

The protein resides in the postsynaptic cell membrane. Its subcellular location is the cell membrane. It carries out the reaction K(+)(in) = K(+)(out). The catalysed reaction is Na(+)(in) = Na(+)(out). Its function is as follows. Upon acetylcholine binding, the AChR responds by an extensive change in conformation that affects all subunits and leads to opening of an ion-conducting channel across the plasma membrane. The protein is Acetylcholine receptor subunit alpha (chrna1) of Electrophorus electricus (Electric eel).